The primary structure comprises 472 residues: Glutamyl-tRNA(Gln) amidotransferase subunit A (472 aa).

Residues Lys-69 and Ser-144 each act as charge relay system in the active site. Ser-168 (acyl-ester intermediate) is an active-site residue.

This sequence belongs to the amidase family. GatA subfamily. In terms of assembly, heterotrimer of A, B and C subunits.

It carries out the reaction L-glutamyl-tRNA(Gln) + L-glutamine + ATP + H2O = L-glutaminyl-tRNA(Gln) + L-glutamate + ADP + phosphate + H(+). Allows the formation of correctly charged Gln-tRNA(Gln) through the transamidation of misacylated Glu-tRNA(Gln) in organisms which lack glutaminyl-tRNA synthetase. The reaction takes place in the presence of glutamine and ATP through an activated gamma-phospho-Glu-tRNA(Gln). This Sulfurisphaera tokodaii (strain DSM 16993 / JCM 10545 / NBRC 100140 / 7) (Sulfolobus tokodaii) protein is Glutamyl-tRNA(Gln) amidotransferase subunit A.